The sequence spans 456 residues: Zinc finger protein 25 (456 aa).

Residues 8 to 79 (VTLKDVIVEF…EVEFPHRGFP (72 aa)) enclose the KRAB domain. 12 C2H2-type zinc fingers span residues 118–140 (CECK…QHTH), 146–168 (YDCD…QKIH), 174–196 (YECK…LRTH), 202–224 (YECN…QKTH), 230–252 (FECT…QKTH), 258–280 (YECK…QRMH), 286–308 (YKCK…QRSH), 314–336 (YECK…QRTH), 342–364 (FECN…QRKH), 370–392 (YECT…QRTH), 398–420 (YACK…QRKH), and 426–448 (YECQ…QKTH).

The protein belongs to the krueppel C2H2-type zinc-finger protein family.

It localises to the nucleus. May be involved in transcriptional regulation. In Homo sapiens (Human), this protein is Zinc finger protein 25 (ZNF25).